A 404-amino-acid polypeptide reads, in one-letter code: Argininosuccinate synthase (404 aa).

ATP contacts are provided by residues 12–20 and Ala-40; that span reads AYSGGLDTS. L-citrulline contacts are provided by Tyr-92 and Ser-97. Gly-122 contacts ATP. L-aspartate contacts are provided by Thr-124, Asn-128, and Asp-129. Position 128 (Asn-128) interacts with L-citrulline. L-citrulline-binding residues include Arg-132, Ser-181, Ser-190, Glu-266, and Tyr-278.

It belongs to the argininosuccinate synthase family. Type 1 subfamily. In terms of assembly, homotetramer.

It localises to the cytoplasm. The enzyme catalyses L-citrulline + L-aspartate + ATP = 2-(N(omega)-L-arginino)succinate + AMP + diphosphate + H(+). Its pathway is amino-acid biosynthesis; L-arginine biosynthesis; L-arginine from L-ornithine and carbamoyl phosphate: step 2/3. The protein is Argininosuccinate synthase of Photorhabdus laumondii subsp. laumondii (strain DSM 15139 / CIP 105565 / TT01) (Photorhabdus luminescens subsp. laumondii).